Consider the following 328-residue polypeptide: tRNA dimethylallyltransferase (328 aa).

Residue 25–32 (GPTAVGKT) participates in ATP binding. 27-32 (TAVGKT) is a binding site for substrate. The interval 50 to 53 (DSMQ) is interaction with substrate tRNA.

The protein belongs to the IPP transferase family. Monomer. It depends on Mg(2+) as a cofactor.

It carries out the reaction adenosine(37) in tRNA + dimethylallyl diphosphate = N(6)-dimethylallyladenosine(37) in tRNA + diphosphate. Its function is as follows. Catalyzes the transfer of a dimethylallyl group onto the adenine at position 37 in tRNAs that read codons beginning with uridine, leading to the formation of N6-(dimethylallyl)adenosine (i(6)A). This is tRNA dimethylallyltransferase from Halothermothrix orenii (strain H 168 / OCM 544 / DSM 9562).